A 448-amino-acid polypeptide reads, in one-letter code: uncharacterized protein (448 aa).

An N6-(pyridoxal phosphate)lysine modification is found at Lys297.

This sequence belongs to the class-III pyridoxal-phosphate-dependent aminotransferase family. Requires pyridoxal 5'-phosphate as cofactor.

This is an uncharacterized protein from Sinorhizobium fredii (strain NBRC 101917 / NGR234).